A 427-amino-acid chain; its full sequence is MTEAMKITLSTQPADARWGEKATYSINNDGIILHLNGADDLGLIQRAARKIDGLGIKHVQLSGESWDADRCWAFWQGYKAPKGTRKVEWPDLDDAQRQELDNRLMIIDWVRDTINAPAEELGPSQLAQRAVDLISNVAGDRVTYRITKGEDLREQGYMGLHTVGRGSERSPVLLALDYNPTGDKEAPVYACLVGKGITFDSGGYSIKQTAFMDSMKSDMGGAATVTGALAFAITRGLNKRVKLFLCCADNLISGNAFKLGDIITYRNGKKVEVMNTDAEGRLVLADGLIDASAQKPELIIDAATLTGAAKTALGNDYHALFSFDDALAGRLLASASQENEPFWRLPLAEFHRSQLPSNFAELNNTGSAAYPAGASTAAGFLSHFVENYQQGWLHIDCSATYRKAPVEQWSAGATGLGVRTIANLLTA.

Residues lysine 195 and aspartate 200 each contribute to the Mn(2+) site. Residue lysine 207 is part of the active site. Mn(2+)-binding residues include aspartate 218, aspartate 277, and glutamate 279. Residue arginine 281 is part of the active site.

The protein belongs to the peptidase M17 family. As to quaternary structure, homohexamer. Requires Mn(2+) as cofactor.

The protein resides in the cytoplasm. The catalysed reaction is Release of an N-terminal amino acid, Xaa, from a peptide or arylamide. Xaa is preferably Glu or Asp but may be other amino acids, including Leu, Met, His, Cys and Gln.. Functionally, probably plays an important role in intracellular peptide degradation. This is Peptidase B from Shigella dysenteriae serotype 1 (strain Sd197).